Reading from the N-terminus, the 500-residue chain is Catalase (500 aa).

Active-site residues include histidine 59 and asparagine 131. Tyrosine 339 serves as a coordination point for heme.

This sequence belongs to the catalase family. Heme is required as a cofactor.

The enzyme catalyses 2 H2O2 = O2 + 2 H2O. Decomposes hydrogen peroxide into water and oxygen; serves to protect cells from the toxic effects of hydrogen peroxide. In Neisseria gonorrhoeae, this protein is Catalase (katA).